The primary structure comprises 170 residues: Thialysine N-epsilon-acetyltransferase (170 aa).

Residues 4 to 168 enclose the N-acetyltransferase domain; that stretch reads VRIREAKEGD…FQGEATRKLA (165 aa). 27 to 28 contributes to the substrate binding site; the sequence is FE. The residue at position 29 (Lys-29) is an N6-acetyllysine. Residue Glu-92 coordinates substrate. Residues 94–96, 102–107, 133–135, and Tyr-140 each bind acetyl-CoA; these read IYV, GQGIGS, and NQR. Tyr-140 acts as the Proton donor in catalysis. Glu-152 is a binding site for substrate.

The protein belongs to the acetyltransferase family. As to quaternary structure, homodimer. As to expression, widely expressed. Under physiological conditions, SSAT2 is expressed at lower level that SSAT1 (SSAT). Many tissues express only SSAT1, several tissues express both SSAT1 and SSAT2, and bone, cervix, ovary and pineal gland expressed only SSAT2.

The protein resides in the cytoplasm. The enzyme catalyses S-(2-aminoethyl)-L-cysteine + acetyl-CoA = S-(2-acetamidoethyl)-L-cysteine + CoA + H(+). The catalysed reaction is an alkane-alpha,omega-diamine + acetyl-CoA = an N-acetylalkane-alpha,omega-diamine + CoA + H(+). In terms of biological role, catalyzes the N-acetylation of the amino acid thialysine (S-(2-aminoethyl)-L-cysteine), a L-lysine analog with the 4-methylene group substituted with a sulfur. May also catalyze acetylation of polyamines, such as norspermidine, spermidine or spermine. However, ability to acetylate polyamines is weak, suggesting that it does not act as a diamine acetyltransferase in vivo. The chain is Thialysine N-epsilon-acetyltransferase from Homo sapiens (Human).